Here is a 180-residue protein sequence, read N- to C-terminus: Ribulose bisphosphate carboxylase small subunit, chloroplastic 3 (180 aa).

Residues 1-56 constitute a chloroplast transit peptide; sequence MASSLMSNAITAVVGASGAQANMVAPFNGLKSIASFPVTRKSNDITSIASNGGRVQ.

This sequence belongs to the RuBisCO small chain family. Heterohexadecamer of 8 large and 8 small subunits.

It is found in the plastid. It localises to the chloroplast. In terms of biological role, ruBisCO catalyzes two reactions: the carboxylation of D-ribulose 1,5-bisphosphate, the primary event in carbon dioxide fixation, as well as the oxidative fragmentation of the pentose substrate. Both reactions occur simultaneously and in competition at the same active site. Although the small subunit is not catalytic it is essential for maximal activity. This is Ribulose bisphosphate carboxylase small subunit, chloroplastic 3 from Amaranthus hypochondriacus (Prince-of-Wales feather).